The sequence spans 222 residues: Cysteine protease inhibitor 9 (222 aa).

The first 26 residues, 1-26 (MKSINILSFLLLSSTLSLVAFARSFS), serve as a signal peptide directing secretion. Positions 27–42 (SENPIVLPSTCHDDDN) are excised as a propeptide. The Vacuolar targeting signal signature appears at 29-34 (NPIVLP). 2 disulfides stabilise this stretch: C84–C136 and C185–C191.

This sequence belongs to the protease inhibitor I3 (leguminous Kunitz-type inhibitor) family. As to expression, tuber.

It is found in the vacuole. Putative inhibitor of cysteine proteases. Does not inhibit papain. May protect the plant by inhibiting proteases of invading organisms. The chain is Cysteine protease inhibitor 9 from Solanum tuberosum (Potato).